Here is a 69-residue protein sequence, read N- to C-terminus: UPF0337 protein DIP1660 (69 aa).

Basic and acidic residues-rich tracts occupy residues 1-19 (MSDF…KEAV) and 30-41 (DEGRADQTKADV). The disordered stretch occupies residues 1–42 (MSDFENKIEELGGKAKEAVGEATENEQLADEGRADQTKADVK).

It belongs to the UPF0337 (CsbD) family.

This chain is UPF0337 protein DIP1660, found in Corynebacterium diphtheriae (strain ATCC 700971 / NCTC 13129 / Biotype gravis).